The primary structure comprises 78 residues: Large ribosomal subunit protein bL28 (78 aa).

Positions 1–26 (MSAYCQVTGRKPSFGKSVSHSHRRTN) are disordered.

The protein belongs to the bacterial ribosomal protein bL28 family.

The protein is Large ribosomal subunit protein bL28 of Corynebacterium jeikeium (strain K411).